The chain runs to 196 residues: dITP/XTP pyrophosphatase (196 aa).

Residue 7–12 (TGNAGK) coordinates substrate. Mg(2+) contacts are provided by Glu39 and Asp68. Asp68 (proton acceptor) is an active-site residue. Residues Ser69, 153–156 (HGYD), Lys176, and 181–182 (HR) contribute to the substrate site.

Belongs to the HAM1 NTPase family. Homodimer. Mg(2+) is required as a cofactor.

It catalyses the reaction XTP + H2O = XMP + diphosphate + H(+). The enzyme catalyses dITP + H2O = dIMP + diphosphate + H(+). The catalysed reaction is ITP + H2O = IMP + diphosphate + H(+). Pyrophosphatase that catalyzes the hydrolysis of nucleoside triphosphates to their monophosphate derivatives, with a high preference for the non-canonical purine nucleotides XTP (xanthosine triphosphate), dITP (deoxyinosine triphosphate) and ITP. Seems to function as a house-cleaning enzyme that removes non-canonical purine nucleotides from the nucleotide pool, thus preventing their incorporation into DNA/RNA and avoiding chromosomal lesions. This Thioalkalivibrio sulfidiphilus (strain HL-EbGR7) protein is dITP/XTP pyrophosphatase.